Consider the following 614-residue polypeptide: Acid phosphatase (614 aa).

The N-terminal stretch at 1 to 22 is a signal peptide; that stretch reads MKGTAASALLVALSATAAQARP. One can recognise a Fibronectin type-III domain in the interval 80–176; that stretch reads IPKGMHIHYQ…EVLSFKTSRP (97 aa). 13 N-linked (GlcNAc...) asparagine glycosylation sites follow: N110, N161, N242, N295, N333, N340, N352, N408, N429, N512, N523, N559, and N578. Positions 606-614 are excised as a propeptide; the sequence is VAGGKKLHS.

In terms of assembly, monomer. Cu cation serves as cofactor. Glycosylated; probably with N-linked high-mannose oligosaccharides.

It localises to the secreted. The enzyme catalyses a phosphate monoester + H2O = an alcohol + phosphate. Its activity is regulated as follows. Competitively inhibited by phosphomycin and inorganic orthophosphate. The protein is Acid phosphatase (aphA) of Aspergillus ficuum.